The sequence spans 505 residues: Maturase K (505 aa).

It belongs to the intron maturase 2 family. MatK subfamily.

Its subcellular location is the plastid. It localises to the chloroplast. In terms of biological role, usually encoded in the trnK tRNA gene intron. Probably assists in splicing its own and other chloroplast group II introns. In Kunzea ericoides (White teatree), this protein is Maturase K.